A 210-amino-acid chain; its full sequence is Outer-membrane lipoprotein LolB (210 aa).

Residues 1-18 (MKKFTKILSLSTLLFLAG) form the signal peptide. Cysteine 19 carries the N-palmitoyl cysteine lipid modification. The S-diacylglycerol cysteine moiety is linked to residue cysteine 19.

This sequence belongs to the LolB family. Monomer.

Its subcellular location is the cell outer membrane. In terms of biological role, plays a critical role in the incorporation of lipoproteins in the outer membrane after they are released by the LolA protein. The sequence is that of Outer-membrane lipoprotein LolB from Actinobacillus pleuropneumoniae serotype 7 (strain AP76).